The primary structure comprises 174 residues: Interferon gamma (174 aa).

A signal peptide spans 1–23; that stretch reads MNSTRCILALLLCLTQAMSGCYG. A Pyrrolidone carboxylic acid modification is found at Gln-24. Asn-39 and Asn-106 each carry an N-linked (GlcNAc...) asparagine glycan.

This sequence belongs to the type II (or gamma) interferon family. In terms of assembly, homodimer. Interacts with IFNGR1 (via extracellular domain); this interaction promotes IFNGR1 dimerization. In terms of tissue distribution, released primarily from activated T lymphocytes.

Its subcellular location is the secreted. Functionally, type II interferon produced by immune cells such as T-cells and NK cells that plays crucial roles in antimicrobial, antiviral, and antitumor responses by activating effector immune cells and enhancing antigen presentation. Primarily signals through the JAK-STAT pathway after interaction with its receptor IFNGR1 to affect gene regulation. Upon IFNG binding, IFNGR1 intracellular domain opens out to allow association of downstream signaling components JAK2, JAK1 and STAT1, leading to STAT1 activation, nuclear translocation and transcription of IFNG-regulated genes. Many of the induced genes are transcription factors such as IRF1 that are able to further drive regulation of a next wave of transcription. Plays a role in class I antigen presentation pathway by inducing a replacement of catalytic proteasome subunits with immunoproteasome subunits. In turn, increases the quantity, quality, and repertoire of peptides for class I MHC loading. Increases the efficiency of peptide generation also by inducing the expression of activator PA28 that associates with the proteasome and alters its proteolytic cleavage preference. Up-regulates as well MHC II complexes on the cell surface by promoting expression of several key molecules such as cathepsins B/CTSB, H/CTSH, and L/CTSL. Participates in the regulation of hematopoietic stem cells during development and under homeostatic conditions by affecting their development, quiescence, and differentiation. The sequence is that of Interferon gamma (IFNG) from Phodopus sungorus (Striped hairy-footed hamster).